We begin with the raw amino-acid sequence, 283 residues long: Para-Rep C7 (283 aa).

The CRESS-DNA virus Rep endonuclease domain maps to 3–96 (SIRATHWCFT…IAGPWEYGTW (94 aa)). The short motif at 10-13 (CFTL) is the RCR-1 element. Residues Glu36 and His42 each coordinate a divalent metal cation. The RCR-2 motif lies at 42–44 (HLQ). Residues 51-71 (KHVTLKKMKELLPGAHLEMAK) carry the Nuclear localization signal motif. Tyr79 acts as the For DNA cleavage activity in catalysis. The RCR-3 signature appears at 79 to 82 (YCQK). A divalent metal cation is bound at residue Glu84. Positions 96–102 (WISSGSH) match the Nuclear localization signal motif. 178–180 (GKS) is a binding site for ATP.

The protein belongs to the nanoviridea/circoviridae replication-associated protein family. In terms of assembly, homooligomer (Potential). Rep binds to repeated DNA motifs (iterons). Mg(2+) serves as cofactor. Requires Mn(2+) as cofactor.

The protein localises to the host nucleus. It carries out the reaction ATP + H2O = ADP + phosphate + H(+). Initiates and terminates the replication only of its own subviral DNA molecule. The closed circular ssDNA genome is first converted to a superhelical dsDNA. Rep binds a specific hairpin at the genome origin of replication. Introduces an endonucleolytic nick within the intergenic region of the genome, thereby initiating the rolling circle replication (RCR). Following cleavage, binds covalently to the 5'-phosphate of DNA as a tyrosyl ester. The cleavage gives rise to a free 3'-OH that serves as a primer for the cellular DNA polymerase. The polymerase synthesizes the (+) strand DNA by rolling circle mechanism. After one round of replication, a Rep-catalyzed nucleotidyl transfer reaction releases a circular single-stranded virus genome, thereby terminating the replication. Displays origin-specific DNA cleavage, nucleotidyl transferase, ATPase and helicase activities. In Faba bean necrotic yellows C7 alphasatellite (FBNYC7A), this protein is Para-Rep C7 (C7).